The sequence spans 204 residues: MKIPSVILASSSSARLRLLKTVGINPIVMPSNFDESTIKLKEPRQLVETLAQAKAETIANSIMKEKLPEKQSNLILGCDSVLVIEDQIYGKPNDKQEAITRWQKMRGQVGQLYTGHALIDLSQNKTIVLCRMTKVHFSHVNDQEIEAYVATEEPLKCAGCFAIDGIGGLFIEKIDGCHTNVIGLSLPLFRVMLNNLGYQVSNFW.

Catalysis depends on D79, which acts as the Proton acceptor.

The protein belongs to the Maf family. It depends on a divalent metal cation as a cofactor.

It is found in the cytoplasm. It catalyses the reaction a ribonucleoside 5'-triphosphate + H2O = a ribonucleoside 5'-phosphate + diphosphate + H(+). It carries out the reaction a 2'-deoxyribonucleoside 5'-triphosphate + H2O = a 2'-deoxyribonucleoside 5'-phosphate + diphosphate + H(+). Nucleoside triphosphate pyrophosphatase. May have a dual role in cell division arrest and in preventing the incorporation of modified nucleotides into cellular nucleic acids. The chain is Nucleoside triphosphate pyrophosphatase from Trichodesmium erythraeum (strain IMS101).